Here is a 447-residue protein sequence, read N- to C-terminus: Phosphoglucosamine mutase (447 aa).

The active-site Phosphoserine intermediate is Ser-104. Residues Ser-104, Asp-243, Asp-245, and Asp-247 each contribute to the Mg(2+) site. At Ser-104 the chain carries Phosphoserine.

This sequence belongs to the phosphohexose mutase family. Mg(2+) is required as a cofactor. Post-translationally, activated by phosphorylation.

The enzyme catalyses alpha-D-glucosamine 1-phosphate = D-glucosamine 6-phosphate. Functionally, catalyzes the conversion of glucosamine-6-phosphate to glucosamine-1-phosphate. This is Phosphoglucosamine mutase from Corynebacterium jeikeium (strain K411).